The sequence spans 237 residues: Proteasome subunit alpha type-5-B (237 aa).

Met1 carries the post-translational modification N-acetylmethionine. Residues Lys43, Lys66, and Lys185 each participate in a glycyl lysine isopeptide (Lys-Gly) (interchain with G-Cter in ubiquitin) cross-link.

It belongs to the peptidase T1A family. In terms of assembly, component of the 20S core complex of the 26S proteasome. The 26S proteasome is composed of a core protease (CP), known as the 20S proteasome, capped at one or both ends by the 19S regulatory particle (RP/PA700). The 20S proteasome core is composed of 28 subunits that are arranged in four stacked rings, resulting in a barrel-shaped structure. The two end rings are each formed by seven alpha subunits, and the two central rings are each formed by seven beta subunits. The catalytic chamber with the active sites is on the inside of the barrel.

Its subcellular location is the cytoplasm. The protein resides in the nucleus. The proteasome is a multicatalytic proteinase complex which is characterized by its ability to cleave peptides with Arg, Phe, Tyr, Leu, and Glu adjacent to the leaving group at neutral or slightly basic pH. The proteasome has an ATP-dependent proteolytic activity. The sequence is that of Proteasome subunit alpha type-5-B (PAE2) from Arabidopsis thaliana (Mouse-ear cress).